The primary structure comprises 155 residues: S-ribosylhomocysteine lyase (155 aa).

Histidine 57, histidine 61, and cysteine 124 together coordinate Fe cation.

It belongs to the LuxS family. As to quaternary structure, homodimer. It depends on Fe cation as a cofactor.

The enzyme catalyses S-(5-deoxy-D-ribos-5-yl)-L-homocysteine = (S)-4,5-dihydroxypentane-2,3-dione + L-homocysteine. Its function is as follows. Involved in the synthesis of autoinducer 2 (AI-2) which is secreted by bacteria and is used to communicate both the cell density and the metabolic potential of the environment. The regulation of gene expression in response to changes in cell density is called quorum sensing. Catalyzes the transformation of S-ribosylhomocysteine (RHC) to homocysteine (HC) and 4,5-dihydroxy-2,3-pentadione (DPD). The protein is S-ribosylhomocysteine lyase of Listeria monocytogenes serotype 4a (strain HCC23).